We begin with the raw amino-acid sequence, 536 residues long: SNW domain-containing protein 1 (536 aa).

The interval 1 to 44 (MALTSFLPAPTQLSQDQLEAEERARSQRSLQTSLVSSRREPPPY) is disordered. N-acetylalanine is present on Ala-2. Position 14 is a phosphoserine (Ser-14). The span at 27–36 (QRSLQTSLVS) shows a compositional bias: polar residues. Positions 59–79 (GDGGAFPEIHVAQYPLDMGRK) are interaction with PPIL1. Glycyl lysine isopeptide (Lys-Gly) (interchain with G-Cter in SUMO2) cross-links involve residues Lys-81, Lys-97, Lys-115, Lys-122, Lys-141, Lys-158, and Lys-170. Residues 174-339 (AQYIRYTPSQ…KARERRAGIK (166 aa)) form an SNW region. 2 positions are modified to phosphoserine: Ser-182 and Ser-190. Residue Lys-193 forms a Glycyl lysine isopeptide (Lys-Gly) (interchain with G-Cter in SUMO2) linkage. The segment at 212–233 (FKINKKIPRGPPSPPAPVMHSP) is disordered. Phosphoserine occurs at positions 224, 232, and 234. Residues Lys-240, Lys-258, Lys-286, Lys-339, Lys-344, Lys-416, and Lys-441 each participate in a glycyl lysine isopeptide (Lys-Gly) (interchain with G-Cter in SUMO2) cross-link. Residues 311–386 (KMAQKEKEKH…RSKLQRNENR (76 aa)) are disordered. Ser-446 bears the Phosphoserine mark. Lys-452 participates in a covalent cross-link: Glycyl lysine isopeptide (Lys-Gly) (interchain with G-Cter in SUMO2). 2 stretches are compositionally biased toward basic and acidic residues: residues 467–489 (IKTN…RGRE) and 503–530 (KFLE…EHEG). The segment at 467 to 536 (IKTNRFVPDK…EHEGKKRRKE (70 aa)) is disordered. Phosphoserine is present on residues Ser-479 and Ser-481. A Glycyl lysine isopeptide (Lys-Gly) (interchain with G-Cter in SUMO2) cross-link involves residue Lys-509.

It belongs to the SNW family. Identified in the spliceosome C complex. Associates with U4/U6-U5 tri-small nuclear ribonucleoproteins (U4/U6-U5 tri-snRNPs). Component of the minor spliceosome, which splices U12-type introns. Interacts with SKI, SMAD2,SMAD3, RBPJ, RB1, PABPN1, MAGEA1, SIRT1, FOXN3, U2AF2, PPIL1, DAXX and ATP1B4. Interacts with VDR and RXRA; preferentially associates with VDR:RXRA heterodimers. Interacts with NCOR2. Interacts with MAML1. Interacts with NOTCH1 NICD; the interaction involves multimerized NOTCH1 NICD. Forms a complex with NOTCH1 NICD and MAML1; the association is dissociated by RBPJ. Associates with positive transcription elongation factor b (P-TEFb). Component of the SNARP complex which consists at least of SNIP1, SNW1, THRAP3, BCLAF1 and PNN.

The protein resides in the nucleus. Functionally, involved in pre-mRNA splicing as component of the spliceosome. As a component of the minor spliceosome, involved in the splicing of U12-type introns in pre-mRNAs. Required in the specific splicing of CDKN1A pre-mRNA; the function probably involves the recruitment of U2AF2 to the mRNA. May recruit PPIL1 to the spliceosome. May be involved in cyclin-D1/CCND1 mRNA stability through the SNARP complex which associates with both the 3'end of the CCND1 gene and its mRNA. Involved in transcriptional regulation. Modulates TGF-beta-mediated transcription via association with SMAD proteins, MYOD1-mediated transcription via association with PABPN1, RB1-mediated transcriptional repression, and retinoid-X receptor (RXR)- and vitamin D receptor (VDR)-dependent gene transcription in a cell line-specific manner probably involving coactivators NCOA1 and GRIP1. Is involved in NOTCH1-mediated transcriptional activation. Binds to multimerized forms of Notch intracellular domain (NICD) and is proposed to recruit transcriptional coactivators such as MAML1 to form an intermediate preactivation complex which associates with DNA-bound CBF-1/RBPJ to form a transcriptional activation complex by releasing SNW1 and redundant NOTCH1 NICD. The chain is SNW domain-containing protein 1 (Snw1) from Mus musculus (Mouse).